Reading from the N-terminus, the 206-residue chain is Small ribosomal subunit protein uS4 (206 aa).

In terms of domain architecture, S4 RNA-binding spans 96–156; sequence TRLDNVVYRM…EKSRTQARIK (61 aa).

The protein belongs to the universal ribosomal protein uS4 family. In terms of assembly, part of the 30S ribosomal subunit. Contacts protein S5. The interaction surface between S4 and S5 is involved in control of translational fidelity.

Functionally, one of the primary rRNA binding proteins, it binds directly to 16S rRNA where it nucleates assembly of the body of the 30S subunit. In terms of biological role, with S5 and S12 plays an important role in translational accuracy. In Shewanella amazonensis (strain ATCC BAA-1098 / SB2B), this protein is Small ribosomal subunit protein uS4.